The following is a 303-amino-acid chain: Putative S-adenosyl-L-methionine-dependent methyltransferase MAP_4197c (303 aa).

S-adenosyl-L-methionine is bound by residues aspartate 129 and 158–159 (DL).

It belongs to the UPF0677 family.

In terms of biological role, exhibits S-adenosyl-L-methionine-dependent methyltransferase activity. The sequence is that of Putative S-adenosyl-L-methionine-dependent methyltransferase MAP_4197c from Mycolicibacterium paratuberculosis (strain ATCC BAA-968 / K-10) (Mycobacterium paratuberculosis).